The primary structure comprises 205 residues: Ribonuclease HII (205 aa).

Positions 14 to 205 (ERICGIDEAG…SFKVRRLNEA (192 aa)) constitute an RNase H type-2 domain. A divalent metal cation is bound by residues D20, E21, and D117.

It belongs to the RNase HII family. Mn(2+) serves as cofactor. Requires Mg(2+) as cofactor.

The protein localises to the cytoplasm. It carries out the reaction Endonucleolytic cleavage to 5'-phosphomonoester.. Functionally, endonuclease that specifically degrades the RNA of RNA-DNA hybrids. The sequence is that of Ribonuclease HII from Chlorobium phaeovibrioides (strain DSM 265 / 1930) (Prosthecochloris vibrioformis (strain DSM 265)).